A 244-amino-acid polypeptide reads, in one-letter code: Small ribosomal subunit protein uS2 (244 aa).

The protein belongs to the universal ribosomal protein uS2 family.

The chain is Small ribosomal subunit protein uS2 from Buchnera aphidicola subsp. Schizaphis graminum (strain Sg).